Reading from the N-terminus, the 453-residue chain is uncharacterized protein (453 aa).

Residues Cys-74, Cys-80, Cys-83, and Cys-162 each coordinate [4Fe-4S] cluster. The S-adenosyl-L-methionine site is built by Gln-286, Tyr-315, Glu-336, and Asp-384. Cys-411 (nucleophile) is an active-site residue.

It belongs to the class I-like SAM-binding methyltransferase superfamily. RNA M5U methyltransferase family.

This is an uncharacterized protein from Staphylococcus aureus (strain MW2).